The chain runs to 497 residues: Glycerol kinase (497 aa).

Threonine 12 lines the ADP pocket. Positions 12, 13, and 14 each coordinate ATP. A sn-glycerol 3-phosphate-binding site is contributed by threonine 12. ADP is bound at residue arginine 16. Sn-glycerol 3-phosphate contacts are provided by arginine 82, glutamate 83, tyrosine 134, and aspartate 243. Positions 82, 83, 134, 243, and 244 each coordinate glycerol. 2 residues coordinate ADP: threonine 265 and glycine 308. Threonine 265, glycine 308, glutamine 312, and glycine 411 together coordinate ATP. Residue glycine 411 participates in ADP binding.

The protein belongs to the FGGY kinase family.

It carries out the reaction glycerol + ATP = sn-glycerol 3-phosphate + ADP + H(+). The protein operates within polyol metabolism; glycerol degradation via glycerol kinase pathway; sn-glycerol 3-phosphate from glycerol: step 1/1. Its activity is regulated as follows. Inhibited by fructose 1,6-bisphosphate (FBP). Functionally, key enzyme in the regulation of glycerol uptake and metabolism. Catalyzes the phosphorylation of glycerol to yield sn-glycerol 3-phosphate. In Rhizobium meliloti (strain 1021) (Ensifer meliloti), this protein is Glycerol kinase.